The following is a 343-amino-acid chain: L-threonine 3-dehydrogenase (343 aa).

Residue cysteine 40 coordinates Zn(2+). Catalysis depends on charge relay system residues threonine 42 and histidine 45. Residues histidine 65, glutamate 66, cysteine 95, cysteine 98, cysteine 101, and cysteine 109 each contribute to the Zn(2+) site. Residues isoleucine 177, aspartate 197, arginine 202, 264–266 (LGI), and 288–289 (IY) each bind NAD(+).

It belongs to the zinc-containing alcohol dehydrogenase family. In terms of assembly, homotetramer. Zn(2+) serves as cofactor.

The protein resides in the cytoplasm. The enzyme catalyses L-threonine + NAD(+) = (2S)-2-amino-3-oxobutanoate + NADH + H(+). Its pathway is amino-acid degradation; L-threonine degradation via oxydo-reductase pathway; glycine from L-threonine: step 1/2. In terms of biological role, catalyzes the NAD(+)-dependent oxidation of L-threonine to 2-amino-3-ketobutyrate. The chain is L-threonine 3-dehydrogenase from Vibrio vulnificus (strain YJ016).